The chain runs to 474 residues: Vasculin-like protein 1 (474 aa).

The disordered stretch occupies residues 17–42; the sequence is QSAKSPTATFEKHGEHLPRGEGRFGV. Residues 26-38 are compositionally biased toward basic and acidic residues; it reads FEKHGEHLPRGEG. Phosphoserine occurs at positions 49 and 76. The interval 91 to 191 is disordered; it reads GNPSGWHSSS…VWENPPSAKQ (101 aa). Residues 116-128 are compositionally biased toward basic residues; it reads NHRHWNGSFHSRK. Basic and acidic residues predominate over residues 136-154; sequence PPMEIREEKKEDKVEKLQF. The residue at position 202 (Ser-202) is a Phosphoserine. The segment at 238-371 is disordered; the sequence is LVPKPVPPPS…EEGCHQNGLA (134 aa). Residues 262 to 277 are compositionally biased toward polar residues; the sequence is GSLSSSRESAFTSPIS. Low complexity predominate over residues 291–312; the sequence is SSPKESPSSTTPPIEISSSRLT. Ser-292 carries the phosphoserine modification. Position 301 is a phosphothreonine (Thr-301). 2 stretches are compositionally biased toward basic and acidic residues: residues 317-346 and 356-365; these read RTTDRKSEFLKTLKDDRNGDFSENRDCDKL and EPKENGEEGC. Ser-382 is modified (phosphoserine). Positions 453–474 are disordered; sequence AEFEDSDTETSSSETSDDDAWK.

Belongs to the vasculin family.

The protein resides in the nucleus. Possible transcription factor. This is Vasculin-like protein 1 (GPBP1L1) from Homo sapiens (Human).